Reading from the N-terminus, the 397-residue chain is Acid extracellular protease (397 aa).

A signal peptide spans 1 to 17 (MQFSLATLTTLLAFVAA). In terms of domain architecture, Peptidase A1 spans 61-378 (YQVQISLGGQ…DLERDEVSIA (318 aa)). Asp77 is an active-site residue. Asn88 is a glycosylation site (N-linked (GlcNAc...) asparagine). The cysteines at positions 93 and 100 are disulfide-linked. Asp264 is a catalytic residue. Cys303 and Cys343 are joined by a disulfide. N-linked (GlcNAc...) asparagine glycosylation is found at Asn310 and Asn314.

The protein belongs to the peptidase A1 family.

The protein resides in the secreted. The polypeptide is Acid extracellular protease (AXP1) (Yarrowia lipolytica (strain CLIB 122 / E 150) (Yeast)).